A 311-amino-acid chain; its full sequence is uncharacterized protein (311 aa).

Belongs to the peptidase C1 family.

This is an uncharacterized protein from Acanthamoeba polyphaga mimivirus (APMV).